A 297-amino-acid polypeptide reads, in one-letter code: Phosphoribosylaminoimidazole-succinocarboxamide synthase (297 aa).

It belongs to the SAICAR synthetase family.

The enzyme catalyses 5-amino-1-(5-phospho-D-ribosyl)imidazole-4-carboxylate + L-aspartate + ATP = (2S)-2-[5-amino-1-(5-phospho-beta-D-ribosyl)imidazole-4-carboxamido]succinate + ADP + phosphate + 2 H(+). The protein operates within purine metabolism; IMP biosynthesis via de novo pathway; 5-amino-1-(5-phospho-D-ribosyl)imidazole-4-carboxamide from 5-amino-1-(5-phospho-D-ribosyl)imidazole-4-carboxylate: step 1/2. In Mycobacterium marinum (strain ATCC BAA-535 / M), this protein is Phosphoribosylaminoimidazole-succinocarboxamide synthase.